The primary structure comprises 274 residues: Large ribosomal subunit protein uL2 (274 aa).

Disordered regions lie at residues 28-55 (APHA…RHVG) and 224-274 (VAMN…RRRK).

It belongs to the universal ribosomal protein uL2 family. As to quaternary structure, part of the 50S ribosomal subunit. Forms a bridge to the 30S subunit in the 70S ribosome.

Functionally, one of the primary rRNA binding proteins. Required for association of the 30S and 50S subunits to form the 70S ribosome, for tRNA binding and peptide bond formation. It has been suggested to have peptidyltransferase activity; this is somewhat controversial. Makes several contacts with the 16S rRNA in the 70S ribosome. The chain is Large ribosomal subunit protein uL2 from Pseudomonas putida (strain W619).